The chain runs to 508 residues: uncharacterized protein (508 aa).

Positions 3-163 constitute a Resolvase/invertase-type recombinase catalytic domain; sequence KAIAYMRFSS…LSWKKKRQDA (161 aa). Residue serine 11 is the O-(5'-phospho-DNA)-serine intermediate of the active site. Positions 175-290 form a DNA-binding region, recombinase; sequence PRWLSLDDKR…QEIRLAPFGI (116 aa).

This is an uncharacterized protein from Escherichia coli (strain K12).